A 1110-amino-acid polypeptide reads, in one-letter code: ATP-dependent DNA helicase MPH1 (1110 aa).

A compositionally biased stretch (polar residues) spans L24–R34. 3 disordered regions span residues L24–K165, F178–N212, and T236–H305. Composition is skewed to basic and acidic residues over residues N42–E57 and F178–A188. Residues E189 to G199 show a composition bias toward acidic residues. 2 stretches are compositionally biased toward polar residues: residues I246–L273 and Q287–E300. The 169-residue stretch at I331 to R499 folds into the Helicase ATP-binding domain. Position 344–351 (L344–T351) interacts with ATP. Positions D447–H450 match the DEAH box motif. Residues I675–S846 form the Helicase C-terminal domain. 3 disordered regions span residues E867–G937, V1013–T1055, and N1069–E1110. Residues R879–F890 are compositionally biased toward basic residues. Composition is skewed to basic and acidic residues over residues H891 to F900, Q1041 to T1055, and E1077 to P1093.

It belongs to the DEAD box helicase family. DEAH subfamily. FANCM sub-subfamily. Interacts with the MHF histone-fold complex to form the FANCM-MHF complex.

It localises to the nucleus. The catalysed reaction is ATP + H2O = ADP + phosphate + H(+). Functionally, ATP-dependent DNA helicase involved in DNA damage repair by homologous recombination and in genome maintenance. Capable of unwinding D-loops. Plays a role in limiting crossover recombinants during mitotic DNA double-strand break (DSB) repair. Component of a FANCM-MHF complex which promotes gene conversion at blocked replication forks, probably by reversal of the stalled fork. This chain is ATP-dependent DNA helicase MPH1, found in Coccidioides immitis (strain RS) (Valley fever fungus).